The primary structure comprises 723 residues: ATP-dependent DNA helicase RRM3 (723 aa).

2 disordered regions span residues 1–31 (MFRS…SGSH) and 61–101 (DLES…DDDP). Ser-64 carries the post-translational modification Phosphoserine. Residues 83 to 96 (NNSSSLFSQSQGSF) show a composition bias toward low complexity. 254–261 (GSAGTGKS) lines the ATP pocket. A DNA-binding region spans residues 682 to 701 (QVYVALSRAVTMDTLQVLNF).

Belongs to the helicase family. Interacts with DEF1 and POL30.

It localises to the nucleus. It is found in the chromosome. The protein localises to the telomere. It carries out the reaction Couples ATP hydrolysis with the unwinding of duplex DNA at the replication fork by translocating in the 5'-3' direction. This creates two antiparallel DNA single strands (ssDNA). The leading ssDNA polymer is the template for DNA polymerase III holoenzyme which synthesizes a continuous strand.. The catalysed reaction is ATP + H2O = ADP + phosphate + H(+). 5' to 3' DNA replicative helicase recruited to paused replisomes to promote fork progression throughout nonhistone protein-DNA complexes, naturally occurring impediments that are encountered in each S phase where replication forks pauses. Needed for normal fork progression through over 1000 discrete sites scattered throughout the genome, like rDNA, tRNA genes, centromeres, active replication origins, or transcriptional silencers. Required for timely replication of the telomere and subtelomeric DNA and for wild-type levels of telomeric silencing. Involved in regulation of Ty1 transposition and protects the genome from instability at nascent sites of retrotransposition. Involved in DNA repair during stalled replication fork, regulation of fragile sites expression and essential for genome stability. Also plays a role in mtDNA replication. Has G-quadruplex (G4) unwinding activity and can suppress G4-induced genome instability when PIF1 levels are low. The sequence is that of ATP-dependent DNA helicase RRM3 from Saccharomyces cerevisiae (strain ATCC 204508 / S288c) (Baker's yeast).